The following is a 419-amino-acid chain: ATP-dependent RNA helicase RhlB (419 aa).

A Q motif motif is present at residues 9 to 37 (QRFSDLALHRIVQQAIKEKGFEFCTPIQA). The 178-residue stretch at 40 to 217 (LPITLKGQDI…FEHMNDPQYV (178 aa)) folds into the Helicase ATP-binding domain. Residue 53–60 (AQTGTGKT) coordinates ATP. Residues 163 to 166 (DEAD) carry the DEAD box motif. The 148-residue stretch at 241 to 388 (KMALLMTLLE…VSQYDAKALI (148 aa)) folds into the Helicase C-terminal domain.

The protein belongs to the DEAD box helicase family. RhlB subfamily. As to quaternary structure, component of the RNA degradosome, which is a multiprotein complex involved in RNA processing and mRNA degradation.

The protein resides in the cytoplasm. It catalyses the reaction ATP + H2O = ADP + phosphate + H(+). Functionally, DEAD-box RNA helicase involved in RNA degradation. Has RNA-dependent ATPase activity and unwinds double-stranded RNA. This Histophilus somni (strain 2336) (Haemophilus somnus) protein is ATP-dependent RNA helicase RhlB.